The sequence spans 945 residues: Isoleucine--tRNA ligase (945 aa).

A 'HIGH' region motif is present at residues 66–76; sequence PYANGDIHLGH. Glutamate 581 provides a ligand contact to L-isoleucyl-5'-AMP. The 'KMSKS' region motif lies at 622–626; it reads KMSKS. Lysine 625 lines the ATP pocket. The Zn(2+) site is built by cysteine 908, cysteine 911, cysteine 928, and cysteine 931.

Belongs to the class-I aminoacyl-tRNA synthetase family. IleS type 1 subfamily. In terms of assembly, monomer. It depends on Zn(2+) as a cofactor.

It localises to the cytoplasm. The enzyme catalyses tRNA(Ile) + L-isoleucine + ATP = L-isoleucyl-tRNA(Ile) + AMP + diphosphate. In terms of biological role, catalyzes the attachment of isoleucine to tRNA(Ile). As IleRS can inadvertently accommodate and process structurally similar amino acids such as valine, to avoid such errors it has two additional distinct tRNA(Ile)-dependent editing activities. One activity is designated as 'pretransfer' editing and involves the hydrolysis of activated Val-AMP. The other activity is designated 'posttransfer' editing and involves deacylation of mischarged Val-tRNA(Ile). This Paraburkholderia phymatum (strain DSM 17167 / CIP 108236 / LMG 21445 / STM815) (Burkholderia phymatum) protein is Isoleucine--tRNA ligase.